Here is a 334-residue protein sequence, read N- to C-terminus: Trans-1,2-dihydrobenzene-1,2-diol dehydrogenase (334 aa).

Belongs to the Gfo/Idh/MocA family. In terms of assembly, homodimer. As to expression, kidney.

It catalyses the reaction (1R,2R)-1,2-dihydrobenzene-1,2-diol + NADP(+) = catechol + NADPH + H(+). The enzyme catalyses D-xylose + NADP(+) = D-xylono-1,5-lactone + NADPH + H(+). This is Trans-1,2-dihydrobenzene-1,2-diol dehydrogenase (DHDH) from Macaca fascicularis (Crab-eating macaque).